A 442-amino-acid chain; its full sequence is Probable serine/threonine-protein kinase PBL17 (442 aa).

Gly-2 carries N-myristoyl glycine lipidation. Cys-4 is lipidated: S-palmitoyl cysteine. Phosphothreonine is present on Thr-79. The 281-residue stretch at 90 to 370 (FRPDYILGEG…NHVVEVLETL (281 aa)) folds into the Protein kinase domain. ATP-binding positions include 96 to 104 (LGEGGFGVV) and Lys-125. Phosphotyrosine is present on Tyr-170. Asp-220 serves as the catalytic Proton acceptor. Phosphoserine is present on Ser-254. A phosphothreonine mark is found at Thr-255 and Thr-260. Tyr-268 is subject to Phosphotyrosine. Positions 385–442 (HSRGKSVTLYEASSDSQGTRDGNGQRRRRPESGRSKSEAAVDTEKYVSTLSEPDTTKI) are disordered. The segment covering 395–406 (EASSDSQGTRDG) has biased composition (polar residues). Positions 414 to 429 (PESGRSKSEAAVDTEK) are enriched in basic and acidic residues. Positions 430 to 442 (YVSTLSEPDTTKI) are enriched in polar residues.

It belongs to the protein kinase superfamily. Ser/Thr protein kinase family.

Its subcellular location is the cell membrane. It carries out the reaction L-seryl-[protein] + ATP = O-phospho-L-seryl-[protein] + ADP + H(+). The catalysed reaction is L-threonyl-[protein] + ATP = O-phospho-L-threonyl-[protein] + ADP + H(+). Functionally, may be involved in plant defense signaling. The sequence is that of Probable serine/threonine-protein kinase PBL17 from Arabidopsis thaliana (Mouse-ear cress).